A 413-amino-acid chain; its full sequence is Probable alpha-tubulin polyglutamylase Ttll1 (413 aa).

The TTL domain occupies 2–370 (ASKKLKYKTD…DDWNDDSSKT (369 aa)). Residues 184–187 (SRYI), Lys197, and Asp199 each bind ATP.

It belongs to the tubulin polyglutamylase family.

It localises to the cytoplasm. It is found in the cytoskeleton. The protein localises to the cilium basal body. Its subcellular location is the contractile vacuole. Functionally, probable tubulin polyglutamylase with a strong preference for alpha-tubulin. Modifies alpha-tubulin, generating side chains of glutamate on the gamma-carboxyl groups of specific glutamate residues within the C-terminal tail of alpha-tubulin. The polypeptide is Probable alpha-tubulin polyglutamylase Ttll1 (Ttll1) (Tetrahymena thermophila (strain SB210)).